The primary structure comprises 225 residues: Ribonuclease 3 (225 aa).

Residues 5–127 (IDKLERKLGY…IIGAIYLDSD (123 aa)) enclose the RNase III domain. E40 contacts Mg(2+). Residue D44 is part of the active site. Mg(2+)-binding residues include D113 and E116. The active site involves E116. Positions 154-224 (DPKTRLQEFL…AETALEQLTN (71 aa)) constitute a DRBM domain.

This sequence belongs to the ribonuclease III family. In terms of assembly, homodimer. Mg(2+) serves as cofactor.

It is found in the cytoplasm. It catalyses the reaction Endonucleolytic cleavage to 5'-phosphomonoester.. Functionally, digests double-stranded RNA. Involved in the processing of primary rRNA transcript to yield the immediate precursors to the large and small rRNAs (23S and 16S). Processes some mRNAs, and tRNAs when they are encoded in the rRNA operon. Processes pre-crRNA and tracrRNA of type II CRISPR loci if present in the organism. The polypeptide is Ribonuclease 3 (Vibrio campbellii (strain ATCC BAA-1116)).